The sequence spans 229 residues: Putative N-acetylmannosamine-6-phosphate 2-epimerase (229 aa).

It belongs to the NanE family.

The enzyme catalyses an N-acyl-D-glucosamine 6-phosphate = an N-acyl-D-mannosamine 6-phosphate. The protein operates within amino-sugar metabolism; N-acetylneuraminate degradation; D-fructose 6-phosphate from N-acetylneuraminate: step 3/5. Its function is as follows. Converts N-acetylmannosamine-6-phosphate (ManNAc-6-P) to N-acetylglucosamine-6-phosphate (GlcNAc-6-P). In Cutibacterium acnes (strain DSM 16379 / KPA171202) (Propionibacterium acnes), this protein is Putative N-acetylmannosamine-6-phosphate 2-epimerase.